Consider the following 212-residue polypeptide: MSLENQTQKERLCAVIRQLHTQGKSPATSTNYSFLDEDQVIFVSRSGVDKSQFQPEDFIAVDTMGLPLPPDEGIKPSAETLIHCFIYQNFPGITCVLHTHSVAATLLSGIFAAKQAVTFSGYEVIKGIAGQTTHETAIALPIFANDQDMKSFCQQLAQRQEELNNYGFLIAKHGLYAWGETMAIAKRHLEVWEFMLECELEQLKITPPLAAR.

Residues His98 and His100 each coordinate Zn(2+).

Belongs to the aldolase class II family. MtnB subfamily. Zn(2+) is required as a cofactor.

It carries out the reaction 5-(methylsulfanyl)-D-ribulose 1-phosphate = 5-methylsulfanyl-2,3-dioxopentyl phosphate + H2O. Its pathway is amino-acid biosynthesis; L-methionine biosynthesis via salvage pathway; L-methionine from S-methyl-5-thio-alpha-D-ribose 1-phosphate: step 2/6. In terms of biological role, catalyzes the dehydration of methylthioribulose-1-phosphate (MTRu-1-P) into 2,3-diketo-5-methylthiopentyl-1-phosphate (DK-MTP-1-P). This Picosynechococcus sp. (strain ATCC 27264 / PCC 7002 / PR-6) (Agmenellum quadruplicatum) protein is Methylthioribulose-1-phosphate dehydratase.